Reading from the N-terminus, the 1269-residue chain is Furin-like protease 1, isoforms 1/1-X/2 (1269 aa).

Residues 1–57 (MKNDVVRWSRQPTSNTTNSSSSSRSDSNSTHKHRSKSNKLNARQLGSNAARSCQQRS) form a disordered region. Over residues 13 to 28 (TSNTTNSSSSSRSDSN) the composition is skewed to low complexity. N-linked (GlcNAc...) asparagine glycosylation is found at Asn15, Asn18, and Asn28. Positions 38 to 57 (NKLNARQLGSNAARSCQQRS) are enriched in polar residues. Asn108 carries N-linked (GlcNAc...) asparagine glycosylation. The chain crosses the membrane as a helical span at residues 119–139 (VFLLALQFSAVVFLCNINVGF). Positions 150 to 163 (SAGGSSPAAPSSAP) are enriched in low complexity. Residues 150–187 (SAGGSSPAAPSSAPSSPPTVAVPPPPPPSSALKVDPNG) are disordered. Residues 164-178 (SSPPTVAVPPPPPPS) are compositionally biased toward pro residues. A glycan (N-linked (GlcNAc...) asparagine) is linked at Asn333. One can recognise a Peptidase S8 domain in the interval 340–654 (MWYLNRGGGL…YGLMDAAEMV (315 aa)). Catalysis depends on charge relay system residues Asp372 and His413. Asn426 carries an N-linked (GlcNAc...) asparagine glycan. Disulfide bonds link Cys430–Cys579 and Cys522–Cys552. Ser587 functions as the Charge relay system in the catalytic mechanism. Asn606 carries N-linked (GlcNAc...) asparagine glycosylation. The 132-residue stretch at 662 to 793 (AVPEQQRCEI…SLIFYGTTQS (132 aa)) folds into the P/Homo B domain. The cysteines at positions 669 and 695 are disulfide-linked. 2 N-linked (GlcNAc...) asparagine glycosylation sites follow: Asn727 and Asn814. Disordered regions lie at residues 796–875 (PNDP…PPKQ), 891–1015 (ANGK…NSRI), 1031–1050 (ELEPYENSSPKGKPKQAKQG), and 1057–1083 (LFKPTNGGNSRQGNTKKSPSVPPPSQT). Low complexity-rich tracts occupy residues 811–821 (TTPNSSSTTSN) and 835–851 (PNNFGSSPSGGSKLPLG). An N-linked (GlcNAc...) asparagine glycan is attached at Asn857. A compositionally biased stretch (polar residues) spans 858–868 (KSSYVTNNPLL). N-linked (GlcNAc...) asparagine glycosylation is found at Asn897 and Asn908. 2 stretches are compositionally biased toward low complexity: residues 905–915 (NKGNKSNNGNK) and 929–940 (TTQSTIIQTSTS). Positions 975–985 (KSYDEKSRKVV) are enriched in basic and acidic residues. Asn994 is a glycosylation site (N-linked (GlcNAc...) asparagine). A compositionally biased stretch (polar residues) spans 1005-1014 (ESTTTSSNSR). A compositionally biased stretch (polar residues) spans 1062 to 1074 (NGGNSRQGNTKKS). Residues 1233 to 1253 (LGLSLLFFMIMQVFFLNFKHA) form a helical membrane-spanning segment.

It belongs to the peptidase S8 family. Furin subfamily. Ca(2+) serves as cofactor. In adults, isoform 1-X is expressed in CNS, fat body and female reproductive tissues, and in embryos, in CNS, tracheal pits, hindgut, posterior spiracles and anal pads.

The protein localises to the golgi apparatus membrane. It carries out the reaction Release of mature proteins from their proproteins by cleavage of -Arg-Xaa-Yaa-Arg-|-Zaa- bonds, where Xaa can be any amino acid and Yaa is Arg or Lys. Releases albumin, complement component C3 and von Willebrand factor from their respective precursors.. In terms of biological role, furin is likely to represent the ubiquitous endoprotease activity within constitutive secretory pathways and capable of cleavage at the RX(K/R)R consensus motif. The polypeptide is Furin-like protease 1, isoforms 1/1-X/2 (Fur1) (Drosophila melanogaster (Fruit fly)).